The following is a 301-amino-acid chain: Protein FdhE homolog (301 aa).

This sequence belongs to the FdhE family.

It is found in the cytoplasm. In terms of biological role, necessary for formate dehydrogenase activity. This is Protein FdhE homolog from Shewanella baltica (strain OS195).